A 279-amino-acid chain; its full sequence is uncharacterized protein (279 aa).

Residues Lys2–Ile90 enclose the GIY-YIG domain.

This sequence belongs to the IIV-6 019R family.

This is an uncharacterized protein from Acheta domesticus (House cricket).